The chain runs to 344 residues: Methionine import ATP-binding protein MetN (344 aa).

The region spanning 2 to 241 (IEINQVNKVF…PKTELAHDFI (240 aa)) is the ABC transporter domain. 38–45 (GSSGAGKS) serves as a coordination point for ATP.

This sequence belongs to the ABC transporter superfamily. Methionine importer (TC 3.A.1.24) family. In terms of assembly, the complex is composed of two ATP-binding proteins (MetN), two transmembrane proteins (MetI) and a solute-binding protein (MetQ).

Its subcellular location is the cell inner membrane. The catalysed reaction is L-methionine(out) + ATP + H2O = L-methionine(in) + ADP + phosphate + H(+). It carries out the reaction D-methionine(out) + ATP + H2O = D-methionine(in) + ADP + phosphate + H(+). Its function is as follows. Part of the ABC transporter complex MetNIQ involved in methionine import. Responsible for energy coupling to the transport system. This Vibrio vulnificus (strain YJ016) protein is Methionine import ATP-binding protein MetN.